The primary structure comprises 242 residues: Probable 2-phosphosulfolactate phosphatase (242 aa).

Belongs to the ComB family. The cofactor is Mg(2+).

It carries out the reaction (2R)-O-phospho-3-sulfolactate + H2O = (2R)-3-sulfolactate + phosphate. In Synechococcus sp. (strain JA-2-3B'a(2-13)) (Cyanobacteria bacterium Yellowstone B-Prime), this protein is Probable 2-phosphosulfolactate phosphatase.